A 597-amino-acid chain; its full sequence is Proteasome-associated ATPase (597 aa).

The segment covering 1 to 12 (MQHDRPGSRPEE) has biased composition (basic and acidic residues). The interval 1 to 22 (MQHDRPGSRPEEGGEQQIGGDA) is disordered. The stretch at 21-97 (DAELNSQIRL…REEVDRLAQP (77 aa)) forms a coiled coil. An ATP-binding site is contributed by 284-289 (GCGKTL). A docks into pockets in the proteasome alpha-ring region spans residues 596–597 (YL).

Belongs to the AAA ATPase family. In terms of assembly, homohexamer. Assembles into a hexameric ring structure that caps the 20S proteasome core. Strongly interacts with the prokaryotic ubiquitin-like protein Pup through a hydrophobic interface; the interacting region of ARC lies in its N-terminal coiled-coil domain. There is one Pup binding site per ARC hexamer ring. Upon ATP-binding, the C-terminus of ARC interacts with the alpha-rings of the proteasome core, possibly by binding to the intersubunit pockets.

The protein operates within protein degradation; proteasomal Pup-dependent pathway. Its function is as follows. ATPase which is responsible for recognizing, binding, unfolding and translocation of pupylated proteins into the bacterial 20S proteasome core particle. May be essential for opening the gate of the 20S proteasome via an interaction with its C-terminus, thereby allowing substrate entry and access to the site of proteolysis. Thus, the C-termini of the proteasomal ATPase may function like a 'key in a lock' to induce gate opening and therefore regulate proteolysis. This chain is Proteasome-associated ATPase, found in Saccharopolyspora erythraea (strain ATCC 11635 / DSM 40517 / JCM 4748 / NBRC 13426 / NCIMB 8594 / NRRL 2338).